Here is a 34-residue protein sequence, read N- to C-terminus: COP9 signalosome complex subunit 5a (34 aa).

It belongs to the peptidase M67A family. CSN5 subfamily. As to quaternary structure, component of the CSN complex, probably composed of CSN1, CSN2, CSN3, CSN4, CSN5 (CSN5A or CSN5B), CSN6 (CSN6A or CSN6B), CSN7 and CSN8. A divalent metal cation serves as cofactor.

The protein localises to the cytoplasm. It localises to the nucleus. Probable protease subunit of the COP9 signalosome complex (CSN), a complex involved in various cellular and developmental processes such as photomorphogenesis and auxin and jasmonate responses. The CSN complex is an essential regulator of the ubiquitin (Ubl) conjugation pathway by mediating the deneddylation of the cullin subunits of the SCF-type E3 ligase complexes, leading to decrease the Ubl ligase activity of SCF. In the complex, it probably acts as the catalytic center that mediates the cleavage of Nedd8 from cullins. It however has no metalloprotease activity by itself and requires the other subunits of the CSN complex. The CSN complex is involved in repression of photomorphogenesis in darkness by regulating the activity of COP1-containing Ubl ligase complexes. This chain is COP9 signalosome complex subunit 5a (CSN5A), found in Brassica oleracea (Wild cabbage).